The following is a 102-amino-acid chain: Small ribosomal subunit protein uS10 (102 aa).

Belongs to the universal ribosomal protein uS10 family. In terms of assembly, part of the 30S ribosomal subunit.

In terms of biological role, involved in the binding of tRNA to the ribosomes. This is Small ribosomal subunit protein uS10 from Enterococcus faecalis (strain ATCC 700802 / V583).